The primary structure comprises 334 residues: Tryptophan--tRNA ligase (334 aa).

Residues 11–13 and 19–20 each bind ATP; these read QPS and GN. The short motif at 12 to 20 is the 'HIGH' region element; that stretch reads PSGELTIGN. D135 serves as a coordination point for L-tryptophan. Residues 147–149, V186, and 195–199 contribute to the ATP site; these read GED and KMSKS. The 'KMSKS' region signature appears at 195–199; it reads KMSKS.

The protein belongs to the class-I aminoacyl-tRNA synthetase family. As to quaternary structure, homodimer.

Its subcellular location is the cytoplasm. The enzyme catalyses tRNA(Trp) + L-tryptophan + ATP = L-tryptophyl-tRNA(Trp) + AMP + diphosphate + H(+). Functionally, catalyzes the attachment of tryptophan to tRNA(Trp). Amino acylates tRNA(Trp) with both L- and D-tryptophan, although D-tryptophan is a poor substrate. The chain is Tryptophan--tRNA ligase from Escherichia coli (strain K12).